The sequence spans 788 residues: Serine/threonine-protein kinase MARK2 (788 aa).

The tract at residues 1–46 (MSSARTPLPTLNERDTEQPTLGHLDSKPSSKSNMIRGRNSATSADE) is disordered. Positions 27-45 (KPSSKSNMIRGRNSATSAD) are enriched in polar residues. A Phosphoserine modification is found at S40. The Protein kinase domain occupies 53–304 (YRLLKTIGKG…LEQIMKDRWM (252 aa)). T58 carries the phosphothreonine; by autocatalysis modification. ATP is bound by residues 59-67 (IGKGNFAKV) and K82. Phosphoserine; by CaMK1 occurs at positions 91, 92, and 93. Residue D175 is the Proton acceptor of the active site. T208 carries the post-translational modification Phosphothreonine; by LKB1 and TAOK1. A Phosphoserine; by GSK3-beta modification is found at S212. S274 carries the post-translational modification Phosphoserine; by autocatalysis. At T275 the chain carries Phosphothreonine; by autocatalysis. T294 carries the post-translational modification Phosphothreonine; by CaMK1. In terms of domain architecture, UBA spans 323 to 362 (YKDPRRTELMVSMGYTREEIQDSLVGQRYNEVMATYLLLG). Residues 373-632 (ITLKPRPSAD…HSQGRRGASG (260 aa)) are disordered. Residues K376 and S409 each carry the phosphoserine modification. Positions 418–432 (PTSNSYSKKTQSNNA) are enriched in polar residues. The span at 433 to 445 (ENKRPEEDRESGR) shows a compositional bias: basic and acidic residues. S456 is modified (phosphoserine). The residue at position 467 (T467) is a Phosphothreonine. Residues 467-486 (TPTPSTNSVLSTSTNRSRNS) are compositionally biased toward polar residues. Phosphoserine is present on residues S486 and S493. Positions 495-504 (GQASIQNGKD) are enriched in polar residues. Over residues 511–525 (SRASTASASAAVSAA) the composition is skewed to low complexity. A phosphoserine mark is found at S569, S571, and S592. The residue at position 596 (T596) is a Phosphothreonine; by PKC/PRKCZ. S619 and S722 each carry phosphoserine. The 50-residue stretch at 739–788 (TPGHEDFVQWEMEVCKLPRLSLNGVRFKRISGTSMAFKNIASKIANELKL) folds into the KA1 domain.

The protein belongs to the protein kinase superfamily. CAMK Ser/Thr protein kinase family. SNF1 subfamily. As to quaternary structure, homodimer. Interacts with PAK5; leading to inhibit the protein kinase activity. Interacts with MAPT/TAU. Interacts with MTCL1 isoform 1; the interaction is direct and increases MARK2 microtubule-binding ability. Interacts (when phosphorylated at Thr-596) with YWHAZ. Interacts with YWHAB, YWHAG and YWHAQ. In terms of assembly, (Microbial infection) In case of infection, interacts with H.pylori CagA, leading to inhibit kinase activity and junctional and polarity defects. Mg(2+) serves as cofactor. Autophosphorylated. Phosphorylated at Thr-208 by STK11/LKB1 in complex with STE20-related adapter-alpha (STRADA) pseudo kinase and CAB39. Phosphorylation at Thr-208 by TAOK1 activates the kinase activity, leading to phosphorylation and detachment of MAPT/TAU from microtubules. Phosphorylation at Ser-212 by GSK3-beta (GSK3B) inhibits the kinase activity. Phosphorylation by CaMK1 promotes activity and is required to promote neurite outgrowth. Phosphorylation at Thr-596 by PRKCZ/aPKC in polarized epithelial cells inhibits the kinase activity and promotes binding to 14-3-3 protein YWHAZ, leading to relocation from cell membrane to cytoplasm. High levels of expression in heart, brain, skeletal muscle and pancreas, lower levels observed in lung, liver and kidney.

The protein localises to the cell membrane. It localises to the cytoplasm. The protein resides in the lateral cell membrane. Its subcellular location is the cytoskeleton. It is found in the cell projection. The protein localises to the dendrite. It carries out the reaction L-seryl-[protein] + ATP = O-phospho-L-seryl-[protein] + ADP + H(+). The enzyme catalyses L-threonyl-[protein] + ATP = O-phospho-L-threonyl-[protein] + ADP + H(+). It catalyses the reaction L-seryl-[tau protein] + ATP = O-phospho-L-seryl-[tau protein] + ADP + H(+). The catalysed reaction is L-threonyl-[tau protein] + ATP = O-phospho-L-threonyl-[tau protein] + ADP + H(+). With respect to regulation, inhibited by PAK5; inhibition is independent of the kinase activity of PAK5. Activated by phosphorylation on Thr-208. Inhibited by phosphorylation at Ser-212 and Thr-596. Inhibited by hymenialdisine. Specifically inhibited by the H.pylori CagA peptide FPLKRHDKVDDLSK that mimics host substrates and binds to the kinase substrate-binding site. In terms of biological role, serine/threonine-protein kinase. Involved in cell polarity and microtubule dynamics regulation. Phosphorylates CRTC2/TORC2, DCX, HDAC7, KIF13B, MAP2, MAP4 and RAB11FIP2. Phosphorylates the microtubule-associated protein MAPT/TAU. Plays a key role in cell polarity by phosphorylating the microtubule-associated proteins MAP2, MAP4 and MAPT/TAU at KXGS motifs, causing detachment from microtubules, and their disassembly. Regulates epithelial cell polarity by phosphorylating RAB11FIP2. Involved in the regulation of neuronal migration through its dual activities in regulating cellular polarity and microtubule dynamics, possibly by phosphorylating and regulating DCX. Regulates axogenesis by phosphorylating KIF13B, promoting interaction between KIF13B and 14-3-3 and inhibiting microtubule-dependent accumulation of KIF13B. Also required for neurite outgrowth and establishment of neuronal polarity. Regulates localization and activity of some histone deacetylases by mediating phosphorylation of HDAC7, promoting subsequent interaction between HDAC7 and 14-3-3 and export from the nucleus. Also acts as a positive regulator of the Wnt signaling pathway, probably by mediating phosphorylation of dishevelled proteins (DVL1, DVL2 and/or DVL3). Modulates the developmental decision to build a columnar versus a hepatic epithelial cell apparently by promoting a switch from a direct to a transcytotic mode of apical protein delivery. Essential for the asymmetric development of membrane domains of polarized epithelial cells. This Homo sapiens (Human) protein is Serine/threonine-protein kinase MARK2.